A 419-amino-acid chain; its full sequence is Serine hydroxymethyltransferase 2 (419 aa).

(6S)-5,6,7,8-tetrahydrofolate contacts are provided by residues Leu120 and 124–126; that span reads GHL. Lys229 is subject to N6-(pyridoxal phosphate)lysine.

Belongs to the SHMT family. As to quaternary structure, homodimer. It depends on pyridoxal 5'-phosphate as a cofactor.

The protein resides in the cytoplasm. The catalysed reaction is (6R)-5,10-methylene-5,6,7,8-tetrahydrofolate + glycine + H2O = (6S)-5,6,7,8-tetrahydrofolate + L-serine. The protein operates within one-carbon metabolism; tetrahydrofolate interconversion. It functions in the pathway amino-acid biosynthesis; glycine biosynthesis; glycine from L-serine: step 1/1. In terms of biological role, catalyzes the reversible interconversion of serine and glycine with tetrahydrofolate (THF) serving as the one-carbon carrier. This reaction serves as the major source of one-carbon groups required for the biosynthesis of purines, thymidylate, methionine, and other important biomolecules. Also exhibits THF-independent aldolase activity toward beta-hydroxyamino acids, producing glycine and aldehydes, via a retro-aldol mechanism. This chain is Serine hydroxymethyltransferase 2, found in Salmonella typhi.